The chain runs to 764 residues: PFL-like enzyme TdcE (764 aa).

A PFL domain is found at 7-629; sequence TSDKLYADAW…KTGNTPDGRR (623 aa). The active-site S-acetylcysteine intermediate is Cys423. Cys424 (cysteine radical intermediate) is an active-site residue. Residues 622–645 form a disordered region; that stretch reads GNTPDGRRAGTPFAPGANPMHGRD. The Glycine radical domain occupies 636–764; it reads PGANPMHGRD…VISRTFTQAL (129 aa). Gly739 is subject to Glycine radical.

It belongs to the glycyl radical enzyme (GRE) family. PFL subfamily.

The protein localises to the cytoplasm. The enzyme catalyses 2-oxobutanoate + CoA = propanoyl-CoA + formate. The catalysed reaction is formate + acetyl-CoA = pyruvate + CoA. It functions in the pathway amino-acid degradation; L-threonine degradation via propanoate pathway; propanoate from L-threonine: step 2/4. With respect to regulation, dependent on PFL-activase. In terms of biological role, catalyzes the cleavage of 2-ketobutyrate to propionyl-CoA and formate. It can also use pyruvate as substrate. The protein is PFL-like enzyme TdcE (tdcE) of Escherichia coli (strain K12).